Reading from the N-terminus, the 217-residue chain is Large ribosomal subunit protein uL1 (217 aa).

Belongs to the universal ribosomal protein uL1 family. As to quaternary structure, part of the 50S ribosomal subunit.

Binds directly to 23S rRNA. Probably involved in E site tRNA release. Its function is as follows. Protein L1 is also a translational repressor protein, it controls the translation of its operon by binding to its mRNA. This Thermoplasma acidophilum (strain ATCC 25905 / DSM 1728 / JCM 9062 / NBRC 15155 / AMRC-C165) protein is Large ribosomal subunit protein uL1.